The sequence spans 231 residues: Ribose-5-phosphate isomerase A (231 aa).

Substrate contacts are provided by residues 40–43 (TGST), 93–96 (DGAD), and 106–109 (KGGG). The active-site Proton acceptor is the Glu-115. Position 133 (Lys-133) interacts with substrate.

This sequence belongs to the ribose 5-phosphate isomerase family. In terms of assembly, homodimer.

It catalyses the reaction aldehydo-D-ribose 5-phosphate = D-ribulose 5-phosphate. It participates in carbohydrate degradation; pentose phosphate pathway; D-ribose 5-phosphate from D-ribulose 5-phosphate (non-oxidative stage): step 1/1. In terms of biological role, catalyzes the reversible conversion of ribose-5-phosphate to ribulose 5-phosphate. The sequence is that of Ribose-5-phosphate isomerase A from Escherichia coli O6:K15:H31 (strain 536 / UPEC).